The chain runs to 338 residues: Fructose-1,6-bisphosphatase class 1 (338 aa).

E90, D112, L114, and D115 together coordinate Mg(2+). Substrate contacts are provided by residues 115 to 118 (DGSS), N207, and K273. A Mg(2+)-binding site is contributed by E279.

It belongs to the FBPase class 1 family. In terms of assembly, homotetramer. It depends on Mg(2+) as a cofactor.

The protein localises to the cytoplasm. The enzyme catalyses beta-D-fructose 1,6-bisphosphate + H2O = beta-D-fructose 6-phosphate + phosphate. It functions in the pathway carbohydrate biosynthesis; gluconeogenesis. In Stenotrophomonas maltophilia (strain R551-3), this protein is Fructose-1,6-bisphosphatase class 1.